We begin with the raw amino-acid sequence, 188 residues long: Elongation factor P-like protein (188 aa).

The protein belongs to the elongation factor P family.

The chain is Elongation factor P-like protein from Stenotrophomonas maltophilia (strain R551-3).